Consider the following 332-residue polypeptide: Cell division protein ZipA (332 aa).

Residues 1–6 (MMQDLR) are Periplasmic-facing. Residues 7–27 (LILIVVGAIAIIALLLHGLWT) form a helical membrane-spanning segment. The Cytoplasmic portion of the chain corresponds to 28–332 (SRKERSSLFR…RIRDVLKANA (305 aa)). Residues 40 to 51 (PVKRAKKARDET) are compositionally biased toward basic and acidic residues. The segment at 40–189 (PVKRAKKARD…VQPAPQQPAE (150 aa)) is disordered. The segment covering 76–88 (SFDSASVDSSSFD) has biased composition (low complexity). Over residues 93-105 (AREDVRSEAKSPF) the composition is skewed to basic and acidic residues.

This sequence belongs to the ZipA family. In terms of assembly, interacts with FtsZ via their C-terminal domains.

The protein resides in the cell inner membrane. Functionally, essential cell division protein that stabilizes the FtsZ protofilaments by cross-linking them and that serves as a cytoplasmic membrane anchor for the Z ring. Also required for the recruitment to the septal ring of downstream cell division proteins. This chain is Cell division protein ZipA, found in Pectobacterium atrosepticum (strain SCRI 1043 / ATCC BAA-672) (Erwinia carotovora subsp. atroseptica).